Consider the following 490-residue polypeptide: Betaine aldehyde dehydrogenase (490 aa).

K(+) is bound by residues Thr26, Ile27, and Asp93. 150–152 (GAW) lines the NAD(+) pocket. Lys162 (charge relay system) is an active-site residue. 176–179 (KPSE) provides a ligand contact to NAD(+). Val180 serves as a coordination point for K(+). Residue 230–233 (GVAS) participates in NAD(+) binding. Leu246 is a binding site for K(+). The active-site Proton acceptor is the Glu252. NAD(+) is bound by residues Gly254, Cys286, and Glu387. Cys286 serves as the catalytic Nucleophile. Cysteine sulfenic acid (-SOH) is present on Cys286. Residues Lys457 and Gly460 each contribute to the K(+) site. Glu464 (charge relay system) is an active-site residue.

This sequence belongs to the aldehyde dehydrogenase family. In terms of assembly, dimer of dimers. It depends on K(+) as a cofactor.

The catalysed reaction is betaine aldehyde + NAD(+) + H2O = glycine betaine + NADH + 2 H(+). Its pathway is amine and polyamine biosynthesis; betaine biosynthesis via choline pathway; betaine from betaine aldehyde: step 1/1. In terms of biological role, involved in the biosynthesis of the osmoprotectant glycine betaine. Catalyzes the irreversible oxidation of betaine aldehyde to the corresponding acid. The polypeptide is Betaine aldehyde dehydrogenase (Escherichia coli O45:K1 (strain S88 / ExPEC)).